The primary structure comprises 520 residues: MVFSSNVFLFLFLPVFLGLYYLSGERYRNLLLLIASYVFYAWWRVDFLLLFAGVTVFNYWIGLRIGAAGVRTRAAQRWLILGVVVDLCVLGYFKYANFGVDSLNEIITSFGMQPFVLTHILLPIGISFYTFESISYIIDVYRGDTPATHNLIDFAAFVAIFPHLIAGPVLRFKDLVDQFNHRTHTVDKFAEGCTRFMQGFVKKVFIADTLAALADHCFALQNPTTGDAWLGALAYTAQLYFDFSGYSDMAIGLGLMMGFRFMENFNQPYISQSITEFWRRWHISLSTWLRDYLYISLGGNRGSTFQTYRNLFLTMLLGGLWHGANFTYIIWGAWHGMWLAIERALGVNAAPRVLNPLKWVITFLLVVIGWVIFRAENLQVAWRMYEAMFSFGTWQLSELNRANLTGLQVGTLVLAYLVLAFFGLRQFYNQPLQTKAPKAAANSDEVAADGPASAQPRAPREAAGDPAAIAYSPSGALVYQPSWLSQLPVLATRLALLLLFAASVLKLSAQSYSPFLYFQF.

The next 10 membrane-spanning stretches (helical) occupy residues 7 to 24 (VFLFLFLPVFLGLYYLSG), 39 to 61 (FYAWWRVDFLLLFAGVTVFNYWI), 78 to 100 (WLILGVVVDLCVLGYFKYANFGV), 115 to 137 (FVLTHILLPIGISFYTFESISYI), 150 to 172 (NLIDFAAFVAIFPHLIAGPVLRF), 239 to 261 (LYFDFSGYSDMAIGLGLMMGFRF), 311 to 333 (LFLTMLLGGLWHGANFTYIIWGA), 353 to 375 (VLNPLKWVITFLLVVIGWVIFRA), 402 to 424 (ANLTGLQVGTLVLAYLVLAFFGL), and 483 to 505 (WLSQLPVLATRLALLLLFAASVL). The active site involves His322.

This sequence belongs to the membrane-bound acyltransferase family.

Its subcellular location is the cell inner membrane. It functions in the pathway glycan biosynthesis; alginate biosynthesis. Functionally, together with AlgJ and AlgF, forms an inner membrane complex which probably interacts with the alginate polymerization-transport complex and adds acetyl groups at the O-2 and O-3 positions of mannuronate residues. Acetylation of alginate is important for the architecture of biofilms and increases resistance to opsonic killing in the host. In Pseudomonas aeruginosa (strain ATCC 15692 / DSM 22644 / CIP 104116 / JCM 14847 / LMG 12228 / 1C / PRS 101 / PAO1), this protein is Probable alginate O-acetylase AlgI (algI).